Consider the following 99-residue polypeptide: Aspartyl/glutamyl-tRNA(Asn/Gln) amidotransferase subunit C (99 aa).

Belongs to the GatC family. Heterotrimer of A, B and C subunits.

The enzyme catalyses L-glutamyl-tRNA(Gln) + L-glutamine + ATP + H2O = L-glutaminyl-tRNA(Gln) + L-glutamate + ADP + phosphate + H(+). It catalyses the reaction L-aspartyl-tRNA(Asn) + L-glutamine + ATP + H2O = L-asparaginyl-tRNA(Asn) + L-glutamate + ADP + phosphate + 2 H(+). Functionally, allows the formation of correctly charged Asn-tRNA(Asn) or Gln-tRNA(Gln) through the transamidation of misacylated Asp-tRNA(Asn) or Glu-tRNA(Gln) in organisms which lack either or both of asparaginyl-tRNA or glutaminyl-tRNA synthetases. The reaction takes place in the presence of glutamine and ATP through an activated phospho-Asp-tRNA(Asn) or phospho-Glu-tRNA(Gln). The protein is Aspartyl/glutamyl-tRNA(Asn/Gln) amidotransferase subunit C of Macrococcus caseolyticus (strain JCSC5402) (Macrococcoides caseolyticum).